The sequence spans 487 residues: b(0,+)-type amino acid transporter 1 (487 aa).

A disordered region spans residues 1–22 (MGETVPRRRREDEKSIQSDEPK). At 1 to 31 (MGETVPRRRREDEKSIQSDEPKTTSLQKEVG) the chain is on the cytoplasmic side. Residue S18 is modified to Phosphoserine. A helical transmembrane segment spans residues 32-55 (LISGICIIVGTIIGSGIFISPKSV). An L-arginine-binding site is contributed by 43 to 47 (IIGSG). The Extracellular segment spans residues 56-62 (LSNTQAV). Residues 63-84 (GPCLIIWAACGVLGTLGALCFA) form a helical membrane-spanning segment. Residues 85–110 (ELGTMITKSGGEYPYLMEAFGPIPAY) are Cytoplasmic-facing. Residues 111 to 137 (LFSWSSLLVMKPSSFAIICLSFSEYVA) form a helical membrane-spanning segment. Over 138–147 (TPFYSGCEPP) the chain is Extracellular. 2 helical membrane-spanning segments follow: residues 148–169 (KVVV…NSLS) and 170–193 (VRLG…IIII). The Extracellular segment spans residues 194 to 217 (SGLVLLAQGNTKNFENSFEGAEVS). The helical transmembrane segment at 218 to 238 (VGAISLALYNGLWAYDGWNQL) threads the bilayer. D233 contributes to the L-arginine binding site. Over 239–251 (NYITEELRNPFRN) the chain is Cytoplasmic. Residues 252–274 (LPLAIIFGIPLVTVCYILINISY) traverse the membrane as a helical segment. At 275–302 (FTVMTPTELLQSQAVAVTFGDRVLYPAS) the chain is on the extracellular side. The helical transmembrane segment at 303–325 (WIVPVFVAFSTIGAANGTCFTAG) threads the bilayer. Over 326-351 (RLVYVAGREGHMLKVLSYISVRRLTP) the chain is Cytoplasmic. The next 2 helical transmembrane spans lie at 352–370 (APAI…IPGD) and 371–391 (INSL…LTIL). Over 392–410 (GLIVMRFTRKELERPIKVP) the chain is Cytoplasmic. A helical membrane pass occupies residues 411–431 (IFIPILVTFIAAFLVLAPVIT). At 432–434 (NPA) the chain is on the extracellular side. A helical membrane pass occupies residues 435–450 (WEYLYCVLFILSGLVF). The Cytoplasmic segment spans residues 451–487 (YFLFVYYKFEWAQKISKPITMHLQMLMEVVPPEPDPK).

It belongs to the amino acid-polyamine-organocation (APC) superfamily. Disulfide-linked heterodimer composed of the catalytic light chain subunit SLC7A9 and the heavy chain subunit. The heterodimer is the minimal functional unit. Assembles in heterotetramers (dimers of heterodimers) and higher order oligomers. Interacts with CAV1. In terms of tissue distribution, kidney and small intestine.

It is found in the apical cell membrane. The enzyme catalyses L-leucine(out) + L-arginine(in) = L-leucine(in) + L-arginine(out). It catalyses the reaction L-histidine(out) + L-arginine(in) = L-histidine(in) + L-arginine(out). The catalysed reaction is L-arginine(in) + L-phenylalanine(out) = L-arginine(out) + L-phenylalanine(in). It carries out the reaction L-cysteine(out) + L-arginine(in) = L-cysteine(in) + L-arginine(out). The enzyme catalyses L-cystine(out) + L-arginine(in) = L-cystine(in) + L-arginine(out). It catalyses the reaction L-lysine(out) + L-arginine(in) = L-lysine(in) + L-arginine(out). Functionally, mediates the electrogenic exchange between cationic amino acids and neutral amino acids, with a stoichiometry of 1:1. Has system b(0,+)-like activity with high affinity for extracellular cationic amino acids and L-cystine and lower affinity for intracellular neutral amino acids. Substrate exchange is driven by high concentration of intracellular neutral amino acids and the intracellular reduction of L-cystine to L-cysteine. Required for reabsorption of L-cystine and dibasic amino acids across the brush border membrane in renal proximal tubules. This Oryctolagus cuniculus (Rabbit) protein is b(0,+)-type amino acid transporter 1.